The sequence spans 268 residues: MVLTKRIIPCLDLKDGRVVKGTHFVGLRDAGDPVELAQRYNEQGADEVVFLDITATREDRGTIIDVVQRAADQLFLPLTVGGGIRTIEDMKQILRAGADKVSINSSAVADPNLISQGAERFGTQCIVVAVDVRRNYETAPGKTPITLADGQECWYEVVTHGGSRGTGLDAVAWATEAEERGAGEILLTSMEADGTKEGFDIPITRAVSETVGIPVVASGGVGTLDHFYDGFTEGKADACLAASVFHYGEFTVRQVKEYLAGRGIPVRL.

Catalysis depends on residues Asp12 and Asp131.

It belongs to the HisA/HisF family. In terms of assembly, heterodimer of HisH and HisF.

It is found in the cytoplasm. It carries out the reaction 5-[(5-phospho-1-deoxy-D-ribulos-1-ylimino)methylamino]-1-(5-phospho-beta-D-ribosyl)imidazole-4-carboxamide + L-glutamine = D-erythro-1-(imidazol-4-yl)glycerol 3-phosphate + 5-amino-1-(5-phospho-beta-D-ribosyl)imidazole-4-carboxamide + L-glutamate + H(+). It participates in amino-acid biosynthesis; L-histidine biosynthesis; L-histidine from 5-phospho-alpha-D-ribose 1-diphosphate: step 5/9. Functionally, IGPS catalyzes the conversion of PRFAR and glutamine to IGP, AICAR and glutamate. The HisF subunit catalyzes the cyclization activity that produces IGP and AICAR from PRFAR using the ammonia provided by the HisH subunit. The chain is Imidazole glycerol phosphate synthase subunit HisF from Methanoculleus marisnigri (strain ATCC 35101 / DSM 1498 / JR1).